A 283-amino-acid chain; its full sequence is Pantothenate synthetase (283 aa).

34-41 (MGALHDGH) lines the ATP pocket. The active-site Proton donor is His41. Residue Gln65 participates in (R)-pantoate binding. Position 65 (Gln65) interacts with beta-alanine. Position 152–155 (152–155 (GEKD)) interacts with ATP. Gln158 contributes to the (R)-pantoate binding site. Residues Val181 and 189-192 (MSSR) each bind ATP.

It belongs to the pantothenate synthetase family. As to quaternary structure, homodimer.

The protein localises to the cytoplasm. The catalysed reaction is (R)-pantoate + beta-alanine + ATP = (R)-pantothenate + AMP + diphosphate + H(+). Its pathway is cofactor biosynthesis; (R)-pantothenate biosynthesis; (R)-pantothenate from (R)-pantoate and beta-alanine: step 1/1. Functionally, catalyzes the condensation of pantoate with beta-alanine in an ATP-dependent reaction via a pantoyl-adenylate intermediate. The protein is Pantothenate synthetase of Rhodopseudomonas palustris (strain BisB18).